Reading from the N-terminus, the 1149-residue chain is MVAATKRRKTHIHKHVKDEAFDDLLKPVYKGKKLTDEINTAQDKWHLLPAFLKVKGLVKQHLDSFNYFVDTDLKKIIKANQLILSDVDPEFYLKYVDIRVGKKSSSSTKDYLTPPHECRLRDMTYSAPIYVDIEYTRGRNIIMHKDVEIGRMPIMLRSNKCILYDADESKMAKLNECPLDPGGYFIVNGTEKVILVQEQLSKNRIIVEADEKKGIVQASVTSSTHERKSKTYVITKNGKIYLKHNSIAEEIPIAIVLKACGILSDLEIMQLVCGNDSSYQDIFAVNLEESSKLDIYTQQQALEYIGAKVKTMRRQKLTILQEGIEAIATTVIAHLTVEALDFREKALYIAMMTRRVVMAMYNPKMIDDRDYVGNKRLELAGQLISLLFEDLFKKFNNDFKLSIDKVLKKPNRAMEYDALLSINVHSNNITSGLNRAISTGNWSLKRFKMERAGVTHVLSRLSYISALGMMTRISSQFEKSRKVSGPRALQPSQFGMLCTADTPEGEACGLVKNLALMTHITTDDEEEPIKKLCYVLGVEDITLIDSASLHLNYGVYLNGTLIGSIRFPTKFVTQFRHLRRTGKVSEFISIYSNSHQMAVHIATDGGRICRPLIIVSDGQSRVKDIHLRKLLDGELDFDDFLKLGLVEYLDVNEENDSYIALYEKDIVPSMTHLEIEPFTILGAVAGLIPYPHHNQSPRNTYQCAMGKQAIGAIAYNQFKRIDTLLYLMTYPQQPMVKTKTIELIDYDKLPAGQNATVAVMSYSGYDIEDALVLNKSSIDRGFGRCETRRKTTTVLKRYANHTQDIIGGMRVDENGDPIWQHQSLGPDGLGEVGMKVQSGQIYINKSVPTNSADAPNPNNVNVQTQYREAPVIYRGPEPSHIDQVMMSVSDNDQALIKVLLRQNRRPELGDKFSSRHGQKGVCGIIVKQEDMPFNDQGIVPDIIMNPHGFPSRMTVGKMIELISGKAGVLNGTLEYGTCFGGSKLEDMSKILVDQGFNYSGKDMLYSGITGECLQAYIFFGPIYYQKLKHMVLDKMHARARGPRAVLTRQPTEGRSRDGGLRLGEMERDCVIAYGASQLLLERLMISSDAFEVDVCDKCGLMGYSGWCTTCKSAENIIKMTIPYAAKLLFQELLSMNIAPRLRLEDIFQQ.

The Zn(2+) site is built by C1095, C1098, C1107, and C1110. Residues 1095 to 1110 (CDKCGLMGYSGWCTTC) form a C4-type zinc finger.

This sequence belongs to the RNA polymerase beta chain family. Component of the RNA polymerase III (Pol III) complex consisting of 17 subunits.

It is found in the nucleus. It catalyses the reaction RNA(n) + a ribonucleoside 5'-triphosphate = RNA(n+1) + diphosphate. DNA-dependent RNA polymerase catalyzes the transcription of DNA into RNA using the four ribonucleoside triphosphates as substrates. Second largest core component of RNA polymerase III which synthesizes small RNAs, such as 5S rRNA and tRNAs. Proposed to contribute to the polymerase catalytic activity and forms the polymerase active center together with the largest subunit. Pol III is composed of mobile elements and RPC2 is part of the core element with the central large cleft and probably a clamp element that moves to open and close the cleft. The protein is DNA-directed RNA polymerase III subunit RPC2 (RET1) of Saccharomyces cerevisiae (strain ATCC 204508 / S288c) (Baker's yeast).